A 324-amino-acid chain; its full sequence is NADH-cytochrome b5 reductase 1 (324 aa).

The chain crosses the membrane as a helical span at residues 49–69; the sequence is LNIVLAFVVGLIGSVVVLLYF. Positions 81 to 184 constitute an FAD-binding FR-type domain; that stretch reads TQWQQYRLME…KGPKGQMRYA (104 aa). FAD is bound by residues 164 to 179 and 190 to 222; these read GSMKIGDLLSVKGPKG and HIGMIAGGTGLTPCLQIIRAALKNPADKTQIDF.

It belongs to the flavoprotein pyridine nucleotide cytochrome reductase family. Monomer. Component of the 2-(3-amino-3-carboxypropyl)histidine synthase complex composed of DPH1, DPH2, DPH3 and a NADH-dependent reductase, predominantly CBR1. The cofactor is FAD.

The protein localises to the mitochondrion outer membrane. It catalyses the reaction 2 Fe(III)-[cytochrome b5] + NADH = 2 Fe(II)-[cytochrome b5] + NAD(+) + H(+). It carries out the reaction 2 Fe(3+)-[Dph3] + NADH = 2 Fe(2+)-[Dph3] + NAD(+) + H(+). It functions in the pathway protein modification; peptidyl-diphthamide biosynthesis. Its function is as follows. NADH-dependent reductase for DPH3 and cytochrome b5. Required for the first step of diphthamide biosynthesis, a post-translational modification of histidine which occurs in elongation factor 2. DPH1 and DPH2 transfer a 3-amino-3-carboxypropyl (ACP) group from S-adenosyl-L-methionine (SAM) to a histidine residue, the reaction is assisted by a reduction system comprising DPH3 and a NADH-dependent reductase, predominantly CBR1. By reducing DPH3, also involved in the formation of the tRNA wobble base modification mcm5s 2U (5-methoxycarbonylmethyl-2-thiouridine), mediated by the elongator complex. The cytochrome b5/NADH cytochrome b5 reductase electron transfer system supports the catalytic activity of several sterol biosynthetic enzymes. The sequence is that of NADH-cytochrome b5 reductase 1 (CBR1) from Mycosarcoma maydis (Corn smut fungus).